The primary structure comprises 482 residues: Reduced viability upon starvation protein 167 (482 aa).

Position 2 is an N-acetylserine (Ser2). The 238-residue stretch at 17 to 254 (FRQKFKMGEQ…YFDLNSDIVE (238 aa)) folds into the BAR domain. Coiled coils occupy residues 31–64 (VYED…NGML) and 174–204 (AKDE…LKTQ). Lys242 participates in a covalent cross-link: Glycyl lysine isopeptide (Lys-Gly) (interchain with G-Cter in ubiquitin). Phosphoserine; by FUS3 and PHO85 occurs at positions 299, 321, and 379. Residues 382 to 407 (LTGLGFQQSPQQQQGPPPAYSNPLTS) form a disordered region. The 62-residue stretch at 421–482 (PGVETVTALY…PGNYVQLNKN (62 aa)) folds into the SH3 domain. Lys481 is covalently cross-linked (Glycyl lysine isopeptide (Lys-Gly) (interchain with G-Cter in ubiquitin)).

Binds to actin. Interacts with ABP1, GYL1, GYP5, PCL2 and YBR108W. In terms of processing, phosphorylated redundantly by cyclin-dependent kinase PHO85 in association with PCL1,2-type cyclins or by MAP kinase FUS3. Phosphorylation inhibits interaction with complexes involved in actin cytoskeleton function.

It localises to the cytoplasm. The protein resides in the cytoskeleton. In terms of biological role, component of a cytoskeletal structure that is required for the formation of endocytic vesicles at the plasma membrane level. Could be implicated in cytoskeletal reorganization in response to environmental stresses and could act in the budding site selection mechanism. In Saccharomyces cerevisiae (strain ATCC 204508 / S288c) (Baker's yeast), this protein is Reduced viability upon starvation protein 167 (RVS167).